A 283-amino-acid chain; its full sequence is CASP-like protein 4A3 (283 aa).

Positions 1–86 are disordered; the sequence is MRSPAKTMPS…VEETPSPIVV (86 aa). Topologically, residues 1–135 are cytoplasmic; sequence MRSPAKTMPS…SRREEVVKFS (135 aa). Residues 9-20 show a composition bias toward low complexity; that stretch reads PSMSPSSVSTEK. A compositionally biased stretch (basic and acidic residues) spans 50 to 79; the sequence is SLDHSSESEKEDAKSKPESRRNKNPGKVEE. The helical transmembrane segment at 136 to 156 threads the bilayer; it reads ALGFRLSEVVLALISFSIMAA. The Extracellular segment spans residues 157 to 174; sequence DKTKGWSGDSFDRYKEYR. Residues 175-195 traverse the membrane as a helical segment; that stretch reads FCLSVNVVAFVYSSFQACDLA. The Cytoplasmic portion of the chain corresponds to 196–212; that stretch reads YHLVKEKHLISHHLRPL. The chain crosses the membrane as a helical span at residues 213–233; sequence FEFIIDQVLAYLLMSASTAAV. Topologically, residues 234–251 are extracellular; it reads TRVDDWVSNWGKDEFTEM. The helical transmembrane segment at 252–272 threads the bilayer; sequence ASASIAMSFLAFLAFAFSSLI. Residues 273 to 283 lie on the Cytoplasmic side of the membrane; that stretch reads SGYNLFNQGSL.

It belongs to the Casparian strip membrane proteins (CASP) family. As to quaternary structure, homodimer and heterodimers.

It localises to the cell membrane. This chain is CASP-like protein 4A3, found in Arabidopsis thaliana (Mouse-ear cress).